Here is a 148-residue protein sequence, read N- to C-terminus: Natriuretic peptide BF131 (148 aa).

The signal sequence occupies residues 1 to 27; the sequence is MVGPSRLAGGGLLLLLLLALLPLALDG. Residues 28-83 constitute a propeptide that is removed on maturation; the sequence is KPAPPPQALPKDPAAASAAERIMRALLPDSKSSRPATDRMVHPEHQAGGGDTRRLQ. Disordered regions lie at residues 54–83 and 105–127; these read LPDSKSSRPATDRMVHPEHQAGGGDTRRLQ and TSDMGCRHRKDPPRAPPAAPSAA. The span at 63–83 shows a compositional bias: basic and acidic residues; that stretch reads ATDRMVHPEHQAGGGDTRRLQ. An intrachain disulfide couples C94 to C110. Residues 130–148 constitute a propeptide that is removed on maturation; it reads AVTWLIRDLRADSKQSRAA.

Belongs to the natriuretic peptide family. As to expression, expressed by the venom gland.

The protein resides in the secreted. Natriuretic peptide that dose-dependently induces the rapid relaxation of rat aortic strips phenylephrine-precontracted. Acts by stimulating cGMP production in a dose-dependent manner (by probably activating NPR1 and/or NPR2). May also show potent hypotensive effects. The protein is Natriuretic peptide BF131 of Bungarus flaviceps flaviceps (Red-headed krait).